We begin with the raw amino-acid sequence, 217 residues long: Adenylate kinase (217 aa).

Position 10–15 (10–15 (GAGKGT)) interacts with ATP. Residues 30 to 59 (STGDIFRQNLRDNTDLGKLAKEYMDKGLLV) form an NMP region. Residues Thr31, Arg36, 57–59 (LLV), 85–88 (GYPR), and Gln92 contribute to the AMP site. The interval 126–163 (GRRVCPNCGATYHIKTSPPAVDNVCDKCGAQLIQRSDD) is LID. Arg127 contacts ATP. Positions 130 and 133 each coordinate Zn(2+). 136 to 137 (TY) lines the ATP pocket. Cys150 and Cys153 together coordinate Zn(2+). AMP contacts are provided by Arg160 and Arg171. Lys199 lines the ATP pocket.

It belongs to the adenylate kinase family. As to quaternary structure, monomer.

The protein resides in the cytoplasm. The catalysed reaction is AMP + ATP = 2 ADP. It participates in purine metabolism; AMP biosynthesis via salvage pathway; AMP from ADP: step 1/1. In terms of biological role, catalyzes the reversible transfer of the terminal phosphate group between ATP and AMP. Plays an important role in cellular energy homeostasis and in adenine nucleotide metabolism. The polypeptide is Adenylate kinase (Thermoanaerobacter pseudethanolicus (strain ATCC 33223 / 39E) (Clostridium thermohydrosulfuricum)).